Consider the following 676-residue polypeptide: Mucin-1 (676 aa).

A signal peptide spans 1–25 (MTPGIRAPFLLTLLLALVTDPNSVA). The tract at residues 25–387 (ALSQDTSSSS…VHNGSLVPTT (363 aa)) is disordered. Residues 26–582 (LSQDTSSSST…QSWPGVPGWG (557 aa)) lie on the Extracellular side of the membrane. 13 consecutive repeat copies span residues 40–59 (PVHSGSSAPATSSAVDSATT), 60–79 (PGHSGSSAPPTSSAVNSATT), 80–99 (PGHSGSSAPPTSSAVNSATT), 100–119 (PVHSGSSAPVTSSAVNSATT), 120–139 (PVHSGSSAPPTSSAVNSATT), 140–159 (PVHSGSSAPVTSSAVNSATT), 160–179 (PVHSGSSAPVTSSAVDSATT), 180–199 (PVHSGSSAPPTSSAVNSATT), 200–219 (PVHSGSSAPVTSSAVNSATT), 220–239 (PVHSGSSAPVTSSAVNSATT), 240–259 (PVHSGSSAPPTSSVVNSATT), 260–279 (PVHSGSSAPPTSSAVNLATT), and 280–299 (PVHSGSSTPATNSTTDSATT). The 13 X approximate tandem repeats of P-V-H-S-G-S-S-A-P-P-T-S-S-A-V-N-S-A-T-T stretch occupies residues 40-314 (PVHSGSSAPA…SSMQTTEAIS (275 aa)). O-linked (GalNAc...) serine glycosylation is found at Ser43, Ser45, and Ser46. O-linked (GalNAc...) threonine glycosylation is present at Thr50. O-linked (GalNAc...) serine glycosylation is found at Ser51, Ser52, and Ser56. 2 O-linked (GalNAc...) threonine glycosylation sites follow: Thr58 and Thr59. Residues Asn291, Asn323, Asn350, Asn380, Asn400, Asn413, Asn435, Asn479, Asn496, and Asn536 are each glycosylated (N-linked (GlcNAc...) asparagine). A compositionally biased stretch (polar residues) spans 404–420 (TMATTTPVGNGTQSSVP). The tract at residues 404 to 434 (TMATTTPVGNGTQSSVPSRHPVTPTPPAVSS) is disordered. The region spanning 463 to 570 (GVSFFLLSFH…INVGEMQFPS (108 aa)) is the SEA domain. A helical transmembrane segment spans residues 583 to 603 (IALLVLVCILVALAIVYLIAL). The Cytoplasmic portion of the chain corresponds to 604–676 (AVCQCRRKNY…PVVATTSANL (73 aa)). Residues Cys606 and Cys608 are each lipidated (S-palmitoyl cysteine). The interval 614–650 (GQLDIFPIQDSYHPMSEYPTYHTHGRYVPPGSTKRSP) is interaction with P53. Tyr625 bears the Phosphotyrosine; by PDGFR mark. The short motif at 625 to 628 (YHPM) is the Interaction with GRB2 element. Phosphotyrosine is present on Tyr634. The segment at 636-659 (THGRYVPPGSTKRSPYEEVSAGNG) is disordered. Position 640 is a phosphotyrosine; by PDGFR (Tyr640). Residues 645–652 (STKRSPYE) are required for interaction with GSK3B. A Phosphothreonine; by PKC/PRKCD modification is found at Thr646. The residue at position 649 (Ser649) is a Phosphoserine; by GSK3-beta. Phosphotyrosine; by CSK, EGFR and SRC is present on Tyr651. The Interaction with SRC and ESR1 signature appears at 651–654 (YEEV). The tract at residues 655 to 662 (SAGNGSSL) is required for interaction with beta- and gamma-catenins. At Tyr664 the chain carries Phosphotyrosine. Positions 664–667 (YTNP) match the Required for interaction with AP1S2 motif.

The alpha subunit forms a tight, non-covalent heterodimeric complex with the proteolytically-released beta-subunit. Binds directly the SH2 domain of GRB2, and forms a MUC1/GRB2/SOS1 complex involved in RAS signaling. The cytoplasmic tail (MUC1CT) interacts with several proteins such as SRC, CTNNB1 and ERBs. Interaction with the SH2 domain of CSK decreases interaction with GSK3B. Interacts with CTNNB1/beta-catenin and JUP/gamma-catenin and promotes cell adhesion. Interaction with JUP/gamma-catenin is induced by heregulin. Binds PRKCD, ERBB2, ERBB3 and ERBB4. Heregulin (HRG) stimulates the interaction with ERBB2 and, to a much lesser extent, the interaction with ERBB3 and ERBB4. Interacts with P53 in response to DNA damage. Interacts with KLF4. Interacts with estrogen receptor alpha/ESR1, through its DNA-binding domain, and stimulates its transcription activity. Binds ADAM17. Post-translationally, probably both N- and O-glycosylated (in repeat region). In terms of processing, proteolytic cleavage in the SEA domain occurs in the endoplasmic reticulum by an autoproteolytic mechanism and requires the full-length SEA domain as well as requiring a Ser, Thr or Cys residue at the P + 1 site. Ectodomain shedding is mediated by ADAM17 in uterine epithelial cells. Dual palmitoylation on cysteine residues in the CQC motif is required for recycling from endosomes back to the plasma membrane. Post-translationally, phosphorylated on tyrosines and serine residues in the C-terminal. Phosphorylation on tyrosines in the C-terminal increases the nuclear location of MUC1 and beta-catenin. Phosphorylation by PKC delta induces binding of MUC1 to beta-catenin/CTNNB1 and thus decreases the formation of the beta-catenin/E-cadherin complex. Src-mediated phosphorylation inhibits interaction with GSK3B. Csk- or Src- or EGFR-mediated phosphorylation on Tyr-651 increases binding to beta-catenin/CTNNB1. GSK3B-mediated phosphorylation on Ser-649 decreases this interaction but restores the formation of the beta-cadherin/E-cadherin complex. On T-cell receptor activation, phosphorylated by LCK. PDGFR-mediated phosphorylation increases nuclear colocalization of MUC1CT and CTNNB1.

The protein localises to the apical cell membrane. It is found in the cell membrane. It localises to the cytoplasm. The protein resides in the nucleus. Its function is as follows. The alpha subunit has cell adhesive properties. Can act both as an adhesion and an anti-adhesion protein. May provide a protective layer on epithelial cells against bacterial and enzyme attack. Functionally, the beta subunit contains a C-terminal domain which is involved in cell signaling, through phosphorylations and protein-protein interactions. Modulates signaling in ERK, Src and NF-kappaB pathways. In activated T-cells, influences directly or indirectly the Ras/MAPK pathway. Promotes tumor progression. Regulates P53-mediated transcription and determines cell fate in the genotoxic stress response. Binds, together with KLF4, the PE21 promoter element of P53 and represses P53 activity. The protein is Mucin-1 (MUC1) of Mesocricetus auratus (Golden hamster).